A 698-amino-acid chain; its full sequence is UvrABC system protein B (698 aa).

The Helicase ATP-binding domain maps to 25 to 183 (NGLNSGLVHQ…TLIDLQFERN (159 aa)). 38-45 (GATGTGKT) is a binding site for ATP. The Beta-hairpin signature appears at 91-114 (YYDAYTPEAYVPSKDLYIEKEAQI). One can recognise a Helicase C-terminal domain in the interval 428–594 (QIDDLLGEIK…GIVKAVRDLT (167 aa)). In terms of domain architecture, UVR spans 622–657 (FKVINALEKQMKQAAKDLEFEKAALLRDQLTEMRQT).

This sequence belongs to the UvrB family. As to quaternary structure, forms a heterotetramer with UvrA during the search for lesions. Interacts with UvrC in an incision complex.

It localises to the cytoplasm. Functionally, the UvrABC repair system catalyzes the recognition and processing of DNA lesions. A damage recognition complex composed of 2 UvrA and 2 UvrB subunits scans DNA for abnormalities. Upon binding of the UvrA(2)B(2) complex to a putative damaged site, the DNA wraps around one UvrB monomer. DNA wrap is dependent on ATP binding by UvrB and probably causes local melting of the DNA helix, facilitating insertion of UvrB beta-hairpin between the DNA strands. Then UvrB probes one DNA strand for the presence of a lesion. If a lesion is found the UvrA subunits dissociate and the UvrB-DNA preincision complex is formed. This complex is subsequently bound by UvrC and the second UvrB is released. If no lesion is found, the DNA wraps around the other UvrB subunit that will check the other stand for damage. The protein is UvrABC system protein B of Herpetosiphon aurantiacus (strain ATCC 23779 / DSM 785 / 114-95).